A 224-amino-acid polypeptide reads, in one-letter code: PKHD-type hydroxylase tll1907 (224 aa).

Positions 77–176 constitute a Fe2OG dioxygenase domain; that stretch reads KIIGPLLFSR…RLVAVAWVQS (100 aa). The Fe cation site is built by His-96, Asp-98, and His-157. Residue Arg-167 coordinates 2-oxoglutarate.

Fe(2+) serves as cofactor. The cofactor is L-ascorbate.

In Thermosynechococcus vestitus (strain NIES-2133 / IAM M-273 / BP-1), this protein is PKHD-type hydroxylase tll1907.